A 148-amino-acid polypeptide reads, in one-letter code: Phospholipase A2-alpha (148 aa).

A signal peptide spans 1 to 20 (MAAPIILFSFLLFFSVSVSA). Cystine bridges form between cysteine 38–cysteine 66, cysteine 42–cysteine 72, cysteine 47–cysteine 122, cysteine 59–cysteine 79, cysteine 78–cysteine 105, and cysteine 85–cysteine 98. Ca(2+) is bound by residues tyrosine 58, glycine 60, and tyrosine 63. The active site involves histidine 82. Aspartate 83 lines the Ca(2+) pocket.

This sequence belongs to the phospholipase A2 family. Interacts with MYB30. Ca(2+) serves as cofactor. In terms of tissue distribution, ubiquitous but expressed at a low level.

It is found in the secreted. The protein localises to the golgi apparatus. Its subcellular location is the cytoplasmic vesicle. It localises to the nucleus. It carries out the reaction a 1,2-diacyl-sn-glycero-3-phosphocholine + H2O = a 1-acyl-sn-glycero-3-phosphocholine + a fatty acid + H(+). Its function is as follows. PA2 catalyzes the calcium-dependent hydrolysis of the 2-acyl groups in 3-sn-phosphoglycerides. Releases lysophospholipids (LPLs) and free fatty acids (FFAs) from membrane phospholipids in response to hormones and other external stimuli. Modulates the trafficking of PIN proteins to the plasma membrane. Negatively regulates MYB30 transcriptional activity and hypersensitive response control. This chain is Phospholipase A2-alpha, found in Arabidopsis thaliana (Mouse-ear cress).